The sequence spans 129 residues: uncharacterized protein (129 aa).

2 disordered regions span residues 1-57 and 87-129; these read MGGG…LPNH and PVSS…WLWW. Over residues 10 to 20 the composition is skewed to basic and acidic residues; that stretch reads SGEERREKRSG. Low complexity predominate over residues 87-99; the sequence is PVSSSPSRSPSSS.

This is an uncharacterized protein from Homo sapiens (Human).